We begin with the raw amino-acid sequence, 405 residues long: LanC-like protein GCL2 (405 aa).

Residues Cys278, Cys323, and His324 each coordinate Zn(2+).

It belongs to the LanC-like protein family.

Its function is as follows. May play a role in signaling. May be not involved in abscisic acid (ABA) signaling. The polypeptide is LanC-like protein GCL2 (GCL2) (Arabidopsis thaliana (Mouse-ear cress)).